We begin with the raw amino-acid sequence, 1011 residues long: Beta-galactosidase A (1011 aa).

A signal peptide spans 1–19 (MKLLSSWVVAALAAQAAGA). Residues tyrosine 96, 140–142 (NAE), and asparagine 199 each bind substrate. The Proton donor role is filled by glutamate 200. Intrachain disulfides connect cysteine 205/cysteine 206 and cysteine 267/cysteine 316. Residue glutamate 299 is the Nucleophile of the active site. Substrate is bound at residue tyrosine 365. 7 N-linked (GlcNAc...) asparagine glycosylation sites follow: asparagine 374, asparagine 456, asparagine 625, asparagine 707, asparagine 763, asparagine 780, and asparagine 917.

Belongs to the glycosyl hydrolase 35 family. As to quaternary structure, monomer.

Its subcellular location is the secreted. The enzyme catalyses Hydrolysis of terminal non-reducing beta-D-galactose residues in beta-D-galactosides.. Cleaves beta-linked terminal galactosyl residues from gangliosides, glycoproteins, and glycosaminoglycans. Has high in vitro transglycosylation activity with p-nitrophenyl-beta-D-galactopyranoside, methyl-beta-D-galactopyranoside or lactose as a donor and galactose as an acceptor. The chain is Beta-galactosidase A (lacA) from Penicillium sp.